We begin with the raw amino-acid sequence, 583 residues long: Proline--tRNA ligase (583 aa).

The protein belongs to the class-II aminoacyl-tRNA synthetase family. ProS type 1 subfamily. Homodimer.

It is found in the cytoplasm. The catalysed reaction is tRNA(Pro) + L-proline + ATP = L-prolyl-tRNA(Pro) + AMP + diphosphate. Its function is as follows. Catalyzes the attachment of proline to tRNA(Pro) in a two-step reaction: proline is first activated by ATP to form Pro-AMP and then transferred to the acceptor end of tRNA(Pro). As ProRS can inadvertently accommodate and process non-cognate amino acids such as alanine and cysteine, to avoid such errors it has two additional distinct editing activities against alanine. One activity is designated as 'pretransfer' editing and involves the tRNA(Pro)-independent hydrolysis of activated Ala-AMP. The other activity is designated 'posttransfer' editing and involves deacylation of mischarged Ala-tRNA(Pro). The misacylated Cys-tRNA(Pro) is not edited by ProRS. In Methylococcus capsulatus (strain ATCC 33009 / NCIMB 11132 / Bath), this protein is Proline--tRNA ligase.